We begin with the raw amino-acid sequence, 472 residues long: Serine/threonine-protein kinase ULK3 (472 aa).

The Protein kinase domain maps to Phe14–Val270. ATP contacts are provided by residues Leu20–Val28 and Lys44. Asp137 serves as the catalytic Proton acceptor. At Ser176 the chain carries Phosphoserine. The MIT 1 domain occupies Ser280 to Val348. Ser350, Ser384, and Ser464 each carry phosphoserine; by autocatalysis. The MIT 2 domain occupies Arg375 to Ile444.

Belongs to the protein kinase superfamily. Ser/Thr protein kinase family. APG1/unc-51/ULK1 subfamily. In terms of assembly, interacts (via protein kinase domain) with SUFU. In terms of processing, autophosphorylated. Autophosphorylation is blocked by interaction with SUFU.

It is found in the cytoplasm. It carries out the reaction L-seryl-[protein] + ATP = O-phospho-L-seryl-[protein] + ADP + H(+). It catalyses the reaction L-threonyl-[protein] + ATP = O-phospho-L-threonyl-[protein] + ADP + H(+). Functionally, serine/threonine protein kinase that acts as a regulator of Sonic hedgehog (SHH) signaling and autophagy. Acts as a negative regulator of SHH signaling in the absence of SHH ligand: interacts with SUFU, thereby inactivating the protein kinase activity and preventing phosphorylation of GLI proteins (GLI1, GLI2 and/or GLI3). Positively regulates SHH signaling in the presence of SHH: dissociates from SUFU, autophosphorylates and mediates phosphorylation of GLI2, activating it and promoting its nuclear translocation. Phosphorylates in vitro GLI2, as well as GLI1 and GLI3, although less efficiently. Also acts as a regulator of autophagy: following cellular senescence, able to induce autophagy. The polypeptide is Serine/threonine-protein kinase ULK3 (Ulk3) (Mus musculus (Mouse)).